We begin with the raw amino-acid sequence, 98 residues long: Ferredoxin-3 (98 aa).

4Fe-4S ferredoxin-type domains are found at residues 18–47 (FVEA…LQAL) and 66–95 (VMSI…HSPL). Residues Cys-27, Cys-30, Cys-33, Cys-37, Cys-75, Cys-78, Cys-81, and Cys-85 each contribute to the [4Fe-4S] cluster site.

Homodimer. Requires [4Fe-4S] cluster as cofactor.

Ferredoxins are iron-sulfur proteins that transfer electrons in a wide variety of metabolic reactions. This is Ferredoxin-3 (fdxB) from Trichormus variabilis (strain ATCC 29413 / PCC 7937) (Anabaena variabilis).